A 315-amino-acid polypeptide reads, in one-letter code: Probable NAD(P)H-dependent D-xylose reductase xyl1 (315 aa).

Y50 functions as the Proton donor in the catalytic mechanism. H112 provides a ligand contact to substrate. Residues 166 to 167, 215 to 224, and 271 to 281 each bind NAD(+); these read SN, SSFGPLSFVE, and KSNDPTRLAQN.

Belongs to the aldo/keto reductase family.

It carries out the reaction xylitol + NAD(+) = D-xylose + NADH + H(+). It catalyses the reaction xylitol + NADP(+) = D-xylose + NADPH + H(+). Its pathway is carbohydrate metabolism; D-xylose degradation. Functionally, catalyzes the initial reaction in the xylose utilization pathway by reducing D-xylose into xylitol. Xylose is a major component of hemicelluloses such as xylan. Most fungi utilize D-xylose via three enzymatic reactions, xylose reductase (XR), xylitol dehydrogenase (XDH), and xylulokinase, to form xylulose 5-phosphate, which enters pentose phosphate pathway. This Aspergillus fumigatus (strain ATCC MYA-4609 / CBS 101355 / FGSC A1100 / Af293) (Neosartorya fumigata) protein is Probable NAD(P)H-dependent D-xylose reductase xyl1 (xyl1).